A 286-amino-acid chain; its full sequence is Beta-lactamase SHV-34 (286 aa).

A signal peptide spans 1–21 (MRYFRLCIISLLATLPLAVHA). Catalysis depends on Ser-66, which acts as the Acyl-ester intermediate. A disulfide bridge links Cys-73 with Cys-119. Glu-164 acts as the Proton acceptor in catalysis. 230–232 (KTG) is a substrate binding site.

This sequence belongs to the class-A beta-lactamase family.

It catalyses the reaction a beta-lactam + H2O = a substituted beta-amino acid. In terms of biological role, hydrolyzes ceftazidime and cefotaxime. In Escherichia coli, this protein is Beta-lactamase SHV-34 (bla).